The primary structure comprises 249 residues: 3-deoxy-D-manno-octulosonic acid kinase (249 aa).

D175 is a catalytic residue.

The protein belongs to the protein kinase superfamily. KdkA/RfaP family.

The protein localises to the cell inner membrane. The enzyme catalyses an alpha-Kdo-(2-&gt;6)-lipid IVA + ATP = a 4-O-phospho-alpha-Kdo-(2-&gt;6)-lipid IVA + ADP + H(+). It functions in the pathway bacterial outer membrane biogenesis; LPS core biosynthesis. In terms of biological role, catalyzes the ATP-dependent phosphorylation of the 3-deoxy-D-manno-octulosonic acid (Kdo) residue in Kdo-lipid IV(A) at the 4-OH position. This Xanthomonas axonopodis pv. citri (strain 306) protein is 3-deoxy-D-manno-octulosonic acid kinase.